Here is an 871-residue protein sequence, read N- to C-terminus: Protein translocase subunit SecA (871 aa).

ATP is bound by residues Gln-80, Gly-98–Thr-102, and Asp-537.

It belongs to the SecA family. Monomer and homodimer. Part of the essential Sec protein translocation apparatus which comprises SecA, SecYEG and auxiliary proteins SecDF. Other proteins may also be involved.

It localises to the cell inner membrane. The protein localises to the cytoplasm. It carries out the reaction ATP + H2O + cellular proteinSide 1 = ADP + phosphate + cellular proteinSide 2.. Part of the Sec protein translocase complex. Interacts with the SecYEG preprotein conducting channel. Has a central role in coupling the hydrolysis of ATP to the transfer of proteins into and across the cell membrane, serving as an ATP-driven molecular motor driving the stepwise translocation of polypeptide chains across the membrane. This is Protein translocase subunit SecA from Thermotoga sp. (strain RQ2).